We begin with the raw amino-acid sequence, 324 residues long: Elongation factor P--(R)-beta-lysine ligase (324 aa).

75 to 77 is a substrate binding site; sequence SPE. ATP is bound by residues 99 to 101 and Asn108; that span reads RNK. Tyr117 is a substrate binding site. Position 243-244 (243-244) interacts with ATP; that stretch reads EL. Glu250 is a binding site for substrate. Gly299 lines the ATP pocket.

This sequence belongs to the class-II aminoacyl-tRNA synthetase family. EpmA subfamily. In terms of assembly, homodimer.

It catalyses the reaction D-beta-lysine + L-lysyl-[protein] + ATP = N(6)-((3R)-3,6-diaminohexanoyl)-L-lysyl-[protein] + AMP + diphosphate + H(+). Its function is as follows. With EpmB is involved in the beta-lysylation step of the post-translational modification of translation elongation factor P (EF-P). Catalyzes the ATP-dependent activation of (R)-beta-lysine produced by EpmB, forming a lysyl-adenylate, from which the beta-lysyl moiety is then transferred to the epsilon-amino group of a conserved specific lysine residue in EF-P. In Buchnera aphidicola subsp. Acyrthosiphon pisum (strain APS) (Acyrthosiphon pisum symbiotic bacterium), this protein is Elongation factor P--(R)-beta-lysine ligase.